Reading from the N-terminus, the 808-residue chain is Beta-catenin/armadillo-related protein 1 (808 aa).

Residues 1 to 85 are involved in transcriptional activation; sequence MDLDPNLVIN…SSHLSGMSSM (85 aa). 3 ARM repeats span residues 118–160, 165–209, and 369–408; these read RAIP…NETK, CVIF…RAIS, and SDVP…NLVA. An involved in transcriptional activation region spans residues 541-808; sequence NVQDVIEGVR…DQYPYRQGRF (268 aa). The interval 702 to 808 is disordered; that stretch reads TYEGAGEQWS…DQYPYRQGRF (107 aa). A compositionally biased stretch (polar residues) spans 723–736; the sequence is YCNSSGRDSSKTYN. Low complexity predominate over residues 737-750; that stretch reads SPMYHSPPSMYPEY. Polar residues predominate over residues 786–798; that stretch reads NIPSNQGPSSHLS.

This sequence belongs to the beta-catenin family. As to quaternary structure, interacts with apr-1, axl-1, daf-16, lin-23, and pop-1 (via acidic region in N-terminus 1-44). Interacts (via ARM repeats) with pry-1.

It is found in the cytoplasm. The protein resides in the nucleus. Its subcellular location is the membrane. The protein localises to the cell junction. In terms of biological role, participates in the Wnt signaling pathway which affects cell fate and may regulate the stem cell divisions of seam cells during larval development. Functions as a transcriptional activator but is dependent on the interaction with pop-1. Involved in maintaining lin-39 Hox expression and regulating glr-1 abundance at the synapses. Required for mab-5 expression during Q neuroblast migration and for oxidative stress-induced daf-16 signaling. Has roles in egg laying, vulva precursor cell fate determination, Q neuroblast migration, posterior ectodermal cell P12 specification, movement, body length, male tail development and dauer induction. Functionally redundant to wrm-1 and hmp-2. This chain is Beta-catenin/armadillo-related protein 1 (bar-1), found in Caenorhabditis briggsae.